The sequence spans 360 residues: Photosystem II protein D1 1 (360 aa).

Helical transmembrane passes span 29 to 46 (YVGW…TAAI), 118 to 133 (HFLI…QWEL), and 142 to 156 (WIPV…AATA). His118 contacts chlorophyll a. Tyr126 lines the pheophytin a pocket. Residues Asp170 and Glu189 each contribute to the [CaMn4O5] cluster site. A helical transmembrane segment spans residues 197 to 218 (FHMIGVAGVFGGALFSAMHGSL). His198 is a chlorophyll a binding site. A quinone-binding positions include His215 and 264–265 (SF). His215 is a binding site for Fe cation. His272 lines the Fe cation pocket. The helical transmembrane segment at 274 to 288 (FLAAWPVIGIWFAAL) threads the bilayer. [CaMn4O5] cluster-binding residues include His332, Glu333, Asp342, and Ala344. The propeptide occupies 345-360 (SGEVQPIALAAPAIAS).

It belongs to the reaction center PufL/M/PsbA/D family. In terms of assembly, PSII is composed of 1 copy each of membrane proteins PsbA, PsbB, PsbC, PsbD, PsbE, PsbF, PsbH, PsbI, PsbJ, PsbK, PsbL, PsbM, PsbT, PsbX, PsbY, PsbZ, Psb30/Ycf12, peripheral proteins PsbO, CyanoQ (PsbQ), PsbU, PsbV and a large number of cofactors. It forms dimeric complexes. Requires The D1/D2 heterodimer binds P680, chlorophylls that are the primary electron donor of PSII, and subsequent electron acceptors. It shares a non-heme iron and each subunit binds pheophytin, quinone, additional chlorophylls, carotenoids and lipids. D1 provides most of the ligands for the Mn4-Ca-O5 cluster of the oxygen-evolving complex (OEC). There is also a Cl(-1) ion associated with D1 and D2, which is required for oxygen evolution. The PSII complex binds additional chlorophylls, carotenoids and specific lipids. as cofactor. Post-translationally, tyr-161 forms a radical intermediate that is referred to as redox-active TyrZ, YZ or Y-Z. In terms of processing, C-terminally processed by CtpA; processing is essential to allow assembly of the oxygen-evolving complex and thus photosynthetic growth.

Its subcellular location is the cellular thylakoid membrane. It carries out the reaction 2 a plastoquinone + 4 hnu + 2 H2O = 2 a plastoquinol + O2. Photosystem II (PSII) is a light-driven water:plastoquinone oxidoreductase that uses light energy to abstract electrons from H(2)O, generating O(2) and a proton gradient subsequently used for ATP formation. It consists of a core antenna complex that captures photons, and an electron transfer chain that converts photonic excitation into a charge separation. The D1/D2 (PsbA/PsbD) reaction center heterodimer binds P680, the primary electron donor of PSII as well as several subsequent electron acceptors. This is Photosystem II protein D1 1 from Trichormus variabilis (strain ATCC 29413 / PCC 7937) (Anabaena variabilis).